Here is a 517-residue protein sequence, read N- to C-terminus: Ribosome assembly protein 4 (517 aa).

A disordered region spans residues 1-25; it reads MATLAPPPSKRQRREEIQRTQTQQD. The interval 34 to 128 is ubiquitin-like (UBL) domain; that stretch reads LGSFKANFID…TITLSAEPQA (95 aa). WD repeat units follow at residues 144–184, 187–226, 230–277, 278–316, 351–397, 402–441, 444–483, and 486–517; these read GHGQ…PKFT, GHTGWVLGVSWSPDGKYLATCSMDTTVRVWDPESGKQVNQ, GHAK…HVLS, GHKGSVSCVKWGGTDLIYTGSHDRSVRVWDAVKGTLVHN, EERR…SKPV, GHQNKVNHVQFSPDGTLIASAGWDNSTKLWNARDGKFIKN, GHVAPVYQCAWSADSRLVVTGSKDCTLKVWNVRTGKLAMD, and GHEDEVYAVDWAADGELVASGGKDKAVRTWRN.

The protein belongs to the NLE1/RSA4 family. As to quaternary structure, associates with the pre-60S ribosomal particle. Interacts (via WD repeats) with uL18. Interacts (via UBL domain) with MDN1 (via VWFA/MIDAS domain). Interacts (via WD repeats) with NSA2.

The protein localises to the nucleus. Its subcellular location is the nucleolus. In terms of biological role, involved in ribosome biogenesis. Required for processing and efficient intra-nuclear transport of pre-60S ribosomal subunits. Interacts with the AAA-ATPase Midasin, which is essential for the ATP-dependent dissociation of a group of nonribosomal factors from the pre-60S particle. In Chaetomium thermophilum (strain DSM 1495 / CBS 144.50 / IMI 039719) (Thermochaetoides thermophila), this protein is Ribosome assembly protein 4.